A 474-amino-acid chain; its full sequence is Tumor necrosis factor receptor superfamily member 1B (474 aa).

Residues M1–T22 form the signal peptide. Topologically, residues V23 to G258 are extracellular. The O-linked (GalNAc...) threonine glycan is linked to T30. TNFR-Cys repeat units lie at residues E39 to A77, D78 to C119, A120 to K164, and A165 to A203. 10 cysteine pairs are disulfide-bonded: C40/C54, C55/C68, C58/C76, C79/C94, C97/C111, C101/C119, C121/C127, C136/C145, C139/C163, and C166/C181. N69 carries an N-linked (GlcNAc...) asparagine glycan. N-linked (GlcNAc...) asparagine glycosylation is present at N195. Residues T208 and T224 are each glycosylated (O-linked (GalNAc...) threonine). Residues Q220–T243 are disordered. The chain crosses the membrane as a helical span at residues I259–R288. Topologically, residues K289–A474 are cytoplasmic. Disordered stretches follow at residues L295–G314, L321–G378, and S397–A463. The span at R297–Q310 shows a compositional bias: basic and acidic residues. Composition is skewed to low complexity over residues A324–A338 and A363–G378. Phosphoserine is present on S331. Residues E429–L442 are compositionally biased toward polar residues.

As to quaternary structure, binds to TRAF2. Interacts with BMX. Interacts (activated form) with XPNPEP3.

Its subcellular location is the membrane. Functionally, receptor with high affinity for TNFSF2/TNF-alpha and approximately 5-fold lower affinity for homotrimeric TNFSF1/lymphotoxin-alpha. The TRAF1/TRAF2 complex recruits the apoptotic suppressors BIRC2 and BIRC3 to TNFRSF1B/TNFR2. This chain is Tumor necrosis factor receptor superfamily member 1B (Tnfrsf1b), found in Mus musculus (Mouse).